We begin with the raw amino-acid sequence, 267 residues long: Serine/threonine-protein kinase 1 (267 aa).

A Protein kinase domain is found at 18 to 266 (IQNNVRLVDG…YETVIKHSFL (249 aa)). Residues 24-32 (LVDGKFGKM) and K47 contribute to the ATP site. The active-site Proton acceptor is D134.

Belongs to the protein kinase superfamily. Ser/Thr protein kinase family.

The catalysed reaction is L-seryl-[protein] + ATP = O-phospho-L-seryl-[protein] + ADP + H(+). The enzyme catalyses L-threonyl-[protein] + ATP = O-phospho-L-threonyl-[protein] + ADP + H(+). This Heliothis zea nuclear polyhedrosis virus (HzSNPV) protein is Serine/threonine-protein kinase 1 (PK1).